The sequence spans 156 residues: MSRRNAAEKRPVLPDPQFNNRLASMMVHRLMKHGKKSTAQKILSDAFGLINERTGSDPIELFETAVKNVTPLVEVRARRVGGATYQVPMEVRQERGIAMALRWLVNFSRSRNGRSMAQKLAGELMDAANEAGNAVRKREETHKMAEANKAFAHYRY.

This sequence belongs to the universal ribosomal protein uS7 family. In terms of assembly, part of the 30S ribosomal subunit. Contacts proteins S9 and S11.

Its function is as follows. One of the primary rRNA binding proteins, it binds directly to 16S rRNA where it nucleates assembly of the head domain of the 30S subunit. Is located at the subunit interface close to the decoding center, probably blocks exit of the E-site tRNA. This is Small ribosomal subunit protein uS7 from Prochlorococcus marinus (strain NATL2A).